A 158-amino-acid polypeptide reads, in one-letter code: S-ribosylhomocysteine lyase (158 aa).

The Fe cation site is built by His-56, His-60, and Cys-125.

It belongs to the LuxS family. As to quaternary structure, homodimer. The cofactor is Fe cation.

The catalysed reaction is S-(5-deoxy-D-ribos-5-yl)-L-homocysteine = (S)-4,5-dihydroxypentane-2,3-dione + L-homocysteine. Functionally, involved in the synthesis of autoinducer 2 (AI-2) which is secreted by bacteria and is used to communicate both the cell density and the metabolic potential of the environment. The regulation of gene expression in response to changes in cell density is called quorum sensing. Catalyzes the transformation of S-ribosylhomocysteine (RHC) to homocysteine (HC) and 4,5-dihydroxy-2,3-pentadione (DPD). The polypeptide is S-ribosylhomocysteine lyase (Leuconostoc citreum (strain KM20)).